The sequence spans 503 residues: MTDKKYIIALDQGTTSSRAVLLDHNANVVEIAQREFTQIYPRAGWVEHNPMEIWATQSSTLNEVVAKAGITSDEIAAIGITNQRETTIVWEKSTGTPVYNAIVWQCRRTADITDKLKADGHEEYIRNTTGLVVDPYFSGTKVKWILDNVEGAREKAERGELLFGTVDTWLVWKLTQGRVHVTDYTNASRTMLFNIHTKQWDDKMLEILNIPRSILPEVRNSSEIYGQTNIGGKGGVRIPVAGIAGDQQAALYGHLCVHAGQAKNTYGTGCFMLLHTGNKAITSKNGLLTTIACNAKGEPEYALEGSVFIAGASIQWLRDELKTVHDSFDSEYFAQKVTDSNGVYVVPAFTGLGAPYWDPYARGAIFGLSRGANCNHIVRATLQSIAYQTRDVLEAMQSDSGERLQYLRVDGGATNNNFLMQFQADILDVNVERPVVKEVTALGAAYLAGLATGFWKDLDELRDKARVERTFSPDSDNEKRERRYKGWKKAVKRSLEWAKEDEE.

Threonine 14 provides a ligand contact to ADP. Threonine 14, threonine 15, and serine 16 together coordinate ATP. Threonine 14 is a sn-glycerol 3-phosphate binding site. Position 18 (arginine 18) interacts with ADP. 4 residues coordinate sn-glycerol 3-phosphate: arginine 84, glutamate 85, tyrosine 136, and aspartate 246. Residues arginine 84, glutamate 85, tyrosine 136, aspartate 246, and glutamine 247 each coordinate glycerol. Threonine 268 and glycine 311 together coordinate ADP. 4 residues coordinate ATP: threonine 268, glycine 311, glutamine 315, and glycine 412. ADP-binding residues include glycine 412 and asparagine 416.

The protein belongs to the FGGY kinase family.

It catalyses the reaction glycerol + ATP = sn-glycerol 3-phosphate + ADP + H(+). It participates in polyol metabolism; glycerol degradation via glycerol kinase pathway; sn-glycerol 3-phosphate from glycerol: step 1/1. Inhibited by fructose 1,6-bisphosphate (FBP). Key enzyme in the regulation of glycerol uptake and metabolism. Catalyzes the phosphorylation of glycerol to yield sn-glycerol 3-phosphate. The sequence is that of Glycerol kinase from Haemophilus influenzae (strain 86-028NP).